The chain runs to 1131 residues: Protein TOPLESS (1131 aa).

A LisH domain is found at 4–36 (LSRELVFLILQFLDEEKFKETVHKLEQESGFFF). A CTLH domain is found at 34-92 (FFFNMKYFEDEVHNGNWDEVEKYLSGFTKVDDNRYSMKIFFEIRKQKYLEALDKHDRPK). Ser-214 is subject to Phosphoserine. Positions 286–305 (TPPTNASLDYPSADSEHVSK) are disordered. WD repeat units lie at residues 353-393 (SQGS…RLVQ), 415-454 (EPVVSVNRVIWSPDGSLFGVAYSRHIVQLYSYHGGEDMRQ), 460-501 (AHVG…KRHT), 504-545 (GHEA…SRVD), 548-591 (APGR…VKRT), 595-634 (FHKRSLGVVQFDTTKNRYLAAGDDFSIKFWDMDAVQLLTA), 639-678 (GGLQASPRIRFNKEGSLLAVSGNENVIKIMANSDGLRLLH), 710-756 (DRSA…EPSQ), 766-805 (LRVAKISRLIFTNSGNAILALASNAIHLLWKWQRNERNAT), 833-871 (NPEEAVPCFALSKNDSYVMSASGGKISLFNMMTFKTMAT), 874-914 (PPPP…VKSK), 917-956 (GHSKRITGLAFSNVLNVLVSSGADAQLCVWNTDGWEKQRS), 967-1005 (NSAPSDTRVQFHQDQAHFLVVHETQLAIYETTKLECMKQ), 1010-1049 (ESLAPITHATFSCDSQLVYASFMDATVCVFSSANLRLRCR), and 1060-1102 (LSNS…GKWG). The segment at 1100–1131 (KWGVAPPAENGSASGAPTAPSVGASASDQPQR) is disordered.

In terms of assembly, tetramer. Homodimer. Interacts (via the LisH domain) with WUS (via the C-terminal domain). Interacts with NINJA/AFPH2. Interacts with IAA1; IAA2; IAA3; IAA4; IAA6; IAA8; IAA9; IAA11; IAA13; IAA14; IAA17; IAA18; IAA26; IAA27 and IAA28. Interacts (via the LisH domain) with IAA12/BDL (via domain I). Can form a complex with IAA12 and ARF5. Interacts with AP2 (via EAR motif) and HDA19. Interacts with TIFY5A/JAZ8 (via EAR motif). Interacts with SPEAR3/TIE1. Interacts with SPL (via EAR motif). Interacts with ZAT2 and ZAT3 (via the EAR motif). Interacts with JAZ13 (via EAR motif). Interacts with GIR1 and GIR2. Expressed in embryo and in extraembryonic tissues. Expressed in inflorescences, flowers, floral meristems, developing anthers and ovules. Detected in the vascular tissues, shoot apical meristem, cotyledons and young leaves. Expressed ubiquitously in the pistils, stamens and pollens.

Its subcellular location is the nucleus. Its function is as follows. Transcriptional corepressor. May repress the expression of root-promoting genes in the top half of the embryo to allow proper differentiation of the shoot pole during the transition stage of embryogenesis. Regulates the expression of PLT1 and PLT2. Negative regulator of jasmonate responses. Negative regulator of auxin responses. Negative regulator of multiple floral organ identity genes. Required for ovule development. The chain is Protein TOPLESS (TPL) from Arabidopsis thaliana (Mouse-ear cress).